Here is a 313-residue protein sequence, read N- to C-terminus: tRNA dimethylallyltransferase (313 aa).

Residue 17-24 (GPTASGKT) coordinates ATP. 19–24 (TASGKT) lines the substrate pocket. 3 interaction with substrate tRNA regions span residues 42–45 (DSAL), 166–170 (QRLSR), and 247–252 (RCVGYR).

It belongs to the IPP transferase family. Monomer. It depends on Mg(2+) as a cofactor.

The catalysed reaction is adenosine(37) in tRNA + dimethylallyl diphosphate = N(6)-dimethylallyladenosine(37) in tRNA + diphosphate. Its function is as follows. Catalyzes the transfer of a dimethylallyl group onto the adenine at position 37 in tRNAs that read codons beginning with uridine, leading to the formation of N6-(dimethylallyl)adenosine (i(6)A). The chain is tRNA dimethylallyltransferase from Pectobacterium atrosepticum (strain SCRI 1043 / ATCC BAA-672) (Erwinia carotovora subsp. atroseptica).